The chain runs to 176 residues: 3-hydroxydecanoyl-[acyl-carrier-protein] dehydratase (176 aa).

His71 is a catalytic residue.

The protein belongs to the thioester dehydratase family. FabA subfamily. In terms of assembly, homodimer.

It is found in the cytoplasm. It carries out the reaction a (3R)-hydroxyacyl-[ACP] = a (2E)-enoyl-[ACP] + H2O. It catalyses the reaction (3R)-hydroxydecanoyl-[ACP] = (2E)-decenoyl-[ACP] + H2O. The catalysed reaction is (2E)-decenoyl-[ACP] = (3Z)-decenoyl-[ACP]. It participates in lipid metabolism; fatty acid biosynthesis. In terms of biological role, necessary for the introduction of cis unsaturation into fatty acids. Catalyzes the dehydration of (3R)-3-hydroxydecanoyl-ACP to E-(2)-decenoyl-ACP and then its isomerization to Z-(3)-decenoyl-ACP. Can catalyze the dehydratase reaction for beta-hydroxyacyl-ACPs with saturated chain lengths up to 16:0, being most active on intermediate chain length. The chain is 3-hydroxydecanoyl-[acyl-carrier-protein] dehydratase from Rhodopseudomonas palustris (strain BisB18).